Reading from the N-terminus, the 199-residue chain is MIEIPTGLPAELVPLSWLLGVWEGSGVVEYAVGDETVRREFGQRISFSHDGLPHLNYSSYAWIEGDDGPVPFVTETGYWRLRRRVTDGDPGPAMLPPTDERPFTTAEEVETLCNADGGFDVEVALVHPGGVSELYVGQVKSARIDLATDAVLRTEGAKSYTGATRLYGFVERDLLWAWDIAALGQPLRTHASGRVSHVD.

A GXWXGXG motif is present at residues 20–26; that stretch reads GVWEGSG. Heme b-binding residues include lysine 158 and histidine 190.

The protein belongs to the nitrobindin family. Homodimer. The cofactor is heme b.

It catalyses the reaction peroxynitrite = nitrate. It participates in nitrogen metabolism. Functionally, heme-binding protein able to scavenge peroxynitrite and to protect free L-tyrosine against peroxynitrite-mediated nitration, by acting as a peroxynitrite isomerase that converts peroxynitrite to nitrate. Therefore, this protein likely plays a role in peroxynitrite sensing and in the detoxification of reactive nitrogen and oxygen species (RNS and ROS, respectively). Is able to bind nitric oxide (NO) in vitro, but may act as a sensor of peroxynitrite levels in vivo. This chain is Peroxynitrite isomerase, found in Clavibacter sepedonicus (Clavibacter michiganensis subsp. sepedonicus).